Reading from the N-terminus, the 583-residue chain is Isocitrate dehydrogenase kinase/phosphatase (583 aa).

Residues 315–321 and lysine 336 contribute to the ATP site; that span reads APGIRGM. Aspartate 371 is an active-site residue.

This sequence belongs to the AceK family.

Its subcellular location is the cytoplasm. It catalyses the reaction L-seryl-[isocitrate dehydrogenase] + ATP = O-phospho-L-seryl-[isocitrate dehydrogenase] + ADP + H(+). Functionally, bifunctional enzyme which can phosphorylate or dephosphorylate isocitrate dehydrogenase (IDH) on a specific serine residue. This is a regulatory mechanism which enables bacteria to bypass the Krebs cycle via the glyoxylate shunt in response to the source of carbon. When bacteria are grown on glucose, IDH is fully active and unphosphorylated, but when grown on acetate or ethanol, the activity of IDH declines drastically concomitant with its phosphorylation. The chain is Isocitrate dehydrogenase kinase/phosphatase from Salmonella gallinarum (strain 287/91 / NCTC 13346).